Reading from the N-terminus, the 312-residue chain is MDWDIIQNLSSNLVFGILLFAMTIYWISLSFFKWTKNLSQVGKISAIVANILLFFILGSRWIVAGYFPLSNLYESLLFLTWTLLTIYLYVEFKTKSKLVGAILIPVALLINGFANLTLSVDMQKSSPLVPALQSNWLMLHVSMMMLSYGTLIMGSLLCILFLVISKYQDIDLQILDESSLPLYNIMLDYYEAKLFSPSDEVSELGKLKLLQSLDNWSYRIIGLGFPFLTIGIIAGGVWANEAWGSYWSWDPKETWALITWIVFATYLHSRITKGWEGKKTAILGGLGFFVIWICYLGVNFLGKGLHSYGWLS.

The next 8 helical transmembrane spans lie at 12-32 (NLVFGILLFAMTIYWISLSFF), 47-67 (IVANILLFFILGSRWIVAGYF), 72-92 (LYESLLFLTWTLLTIYLYVEF), 98-118 (LVGAILIPVALLINGFANLTL), 144-164 (MMLSYGTLIMGSLLCILFLVI), 220-240 (IIGLGFPFLTIGIIAGGVWAN), 254-271 (TWALITWIVFATYLHSRI), and 281-301 (AILGGLGFFVIWICYLGVNFL).

The protein belongs to the CcmF/CycK/Ccl1/NrfE/CcsA family. May interact with Ccs1.

The protein localises to the plastid. It is found in the chloroplast thylakoid membrane. Functionally, required during biogenesis of c-type cytochromes (cytochrome c6 and cytochrome f) at the step of heme attachment. In Trieres chinensis (Marine centric diatom), this protein is Cytochrome c biogenesis protein CcsA.